The sequence spans 483 residues: Fructose-like PTS system EIIBC component (483 aa).

Positions 1 to 105 (MESSLRIVAI…IDQIFSELPT (105 aa)) constitute a PTS EIIB type-2 domain. Catalysis depends on Cys-13, which acts as the Phosphocysteine intermediate; for EIIB activity. Cys-13 is modified (phosphocysteine; by EIIA). In terms of domain architecture, PTS EIIC type-2 spans 128–475 (VMSHLMAGVS…LWLRRKAKAA (348 aa)). The next 10 helical transmembrane spans lie at 132-152 (LMAG…LVAL), 180-200 (IGYL…ASSI), 204-224 (PAFA…LLGT), 227-247 (GAGF…VFWF), 264-284 (LIPF…IGPV), 303-323 (MKFA…GGPI), 344-364 (AIVG…TFIA), 380-400 (IVVG…AAPL), 402-422 (MITA…AFGI), and 442-462 (VGSF…FIIV).

It localises to the cell inner membrane. The catalysed reaction is D-fructose(out) + N(pros)-phospho-L-histidyl-[protein] = D-fructose 1-phosphate(in) + L-histidyl-[protein]. In terms of biological role, the phosphoenolpyruvate-dependent sugar phosphotransferase system (sugar PTS), a major carbohydrate active transport system, catalyzes the phosphorylation of incoming sugar substrates concomitantly with their translocation across the cell membrane. The enzyme II FrvAB PTS system is involved in fructose transport. This chain is Fructose-like PTS system EIIBC component, found in Escherichia coli (strain K12).